The chain runs to 555 residues: MSEAEARPSNFIRQIIDEDLASGKHTSVHTRFPPEPNGYLHIGHAKSICLNFGIAEDYQGQCNLRFDDTNPVKEDVEFVESIKRDVEWLGFTWSGDVRYSSDYFDQLYQYAVELINKGLAYVDELTPEQMREYRGTLTAPGKNSPYRDRSVEENLVLFEKMRAGGFAEGTACLRAKIDMASPFIVMRDPVLYRIKFAEHHQSGNKWCIYPMYDFTHCISDALEGITHSLCTLEFQDNRRLYDWVLDNISIDCHPRQYEFSRLNLEYTIMSKRKLNQLVTEKVVEGWDDPRMPTISGLRRRGYTAASIREFCRRIGVTKQDNNVEMMSLESCIRDDLNEHAPRAMAVLDPIKVVIENRAAGEEWLTMPNHPNNPEMGSRQVPFDSEIYIDRADFREEANKQYKRLVLGKEVRLRNAYVIKAERVEKDAEGNVTTLYCSYDAETLNKDPADGRKVKGVIHWVSVAHALPAEIRLYDRLFNVPNPAAAEDFLSTINPESLVIRQGFVEPSLADAVSDKTYQFEREGYFCADSRYSRPGALVFNRTVGLRDTWAAKATQ.

Positions 34-44 (PEPNGYLHIGH) match the 'HIGH' region motif. ATP is bound by residues 35–37 (EPN) and 41–47 (HIGHAKS). Residues aspartate 67 and tyrosine 212 each coordinate L-glutamine. ATP-binding positions include threonine 231, 261-262 (RL), and 269-271 (MSK). Positions 268-272 (IMSKR) match the 'KMSKS' region motif.

Belongs to the class-I aminoacyl-tRNA synthetase family. Monomer.

It is found in the cytoplasm. The catalysed reaction is tRNA(Gln) + L-glutamine + ATP = L-glutaminyl-tRNA(Gln) + AMP + diphosphate. This chain is Glutamine--tRNA ligase, found in Yersinia pseudotuberculosis serotype O:3 (strain YPIII).